The sequence spans 515 residues: Maturase K (515 aa).

Belongs to the intron maturase 2 family. MatK subfamily.

The protein localises to the plastid. It localises to the chloroplast. Functionally, usually encoded in the trnK tRNA gene intron. Probably assists in splicing its own and other chloroplast group II introns. In Pinus attenuata (Knobcone pine), this protein is Maturase K.